A 73-amino-acid chain; its full sequence is Structural DNA-binding protein p10 (73 aa).

The disordered stretch occupies residues 1–35 (MPTKAGTKSTAHKKTTTKGPSKSPKGKTHATALHQ).

It belongs to the asfivirus P10 family.

It localises to the virion. In terms of biological role, may play a role in genome packaging through direct interaction with viral DNA. Binds to ssDNA and dsDNA with the same apparent affinity in vitro. The chain is Structural DNA-binding protein p10 from African swine fever virus (isolate Tick/Malawi/Lil 20-1/1983) (ASFV).